A 180-amino-acid chain; its full sequence is Ribulose bisphosphate carboxylase small subunit, chloroplastic (180 aa).

Residues 1-57 (MVSSMMVSSAATFTRASPAQSSMVAPFTGLKSASAFPVTRKPNADLSHLPSNGGRVQ) constitute a chloroplast transit peptide.

This sequence belongs to the RuBisCO small chain family. As to quaternary structure, heterohexadecamer of 8 large and 8 small subunits.

The protein localises to the plastid. It is found in the chloroplast. In terms of biological role, ruBisCO catalyzes two reactions: the carboxylation of D-ribulose 1,5-bisphosphate, the primary event in carbon dioxide fixation, as well as the oxidative fragmentation of the pentose substrate. Both reactions occur simultaneously and in competition at the same active site. Although the small subunit is not catalytic it is essential for maximal activity. This is Ribulose bisphosphate carboxylase small subunit, chloroplastic from Musa acuminata (Banana).